The following is a 907-amino-acid chain: DNA mismatch repair protein MutS (907 aa).

Residue 656 to 663 participates in ATP binding; the sequence is GPNMAGKS.

It belongs to the DNA mismatch repair MutS family.

This protein is involved in the repair of mismatches in DNA. It is possible that it carries out the mismatch recognition step. This protein has a weak ATPase activity. The chain is DNA mismatch repair protein MutS from Nitrobacter hamburgensis (strain DSM 10229 / NCIMB 13809 / X14).